The following is a 166-amino-acid chain: Cofilin-2 (166 aa).

An ADF-H domain is found at 4–153 (GVTVNDEVIK…KDRSTLGEKL (150 aa)). Ser24 is subject to Phosphoserine. The Nuclear localization signal signature appears at 30–34 (KKRKK).

The protein belongs to the actin-binding proteins ADF family. The phosphorylation of Ser-24 may prevent recognition of the nuclear localization signal. In terms of tissue distribution, widely distributed in various tissues.

The protein resides in the nucleus matrix. The protein localises to the cytoplasm. Its subcellular location is the cytoskeleton. Its function is as follows. Controls reversibly actin polymerization and depolymerization in a pH-sensitive manner. It has the ability to bind G- and F-actin in a 1:1 ratio of cofilin to actin. It is the major component of intranuclear and cytoplasmic actin rods. The chain is Cofilin-2 (CFL2) from Gallus gallus (Chicken).